A 161-amino-acid polypeptide reads, in one-letter code: ATP synthase subunit b 1 (161 aa).

The helical transmembrane segment at 5 to 25 threads the bilayer; the sequence is EFWVAVAFVIFCGIVWKAGGF.

The protein belongs to the ATPase B chain family. F-type ATPases have 2 components, F(1) - the catalytic core - and F(0) - the membrane proton channel. F(1) has five subunits: alpha(3), beta(3), gamma(1), delta(1), epsilon(1). F(0) has three main subunits: a(1), b(2) and c(10-14). The alpha and beta chains form an alternating ring which encloses part of the gamma chain. F(1) is attached to F(0) by a central stalk formed by the gamma and epsilon chains, while a peripheral stalk is formed by the delta and b chains.

The protein resides in the cell inner membrane. Its function is as follows. F(1)F(0) ATP synthase produces ATP from ADP in the presence of a proton or sodium gradient. F-type ATPases consist of two structural domains, F(1) containing the extramembraneous catalytic core and F(0) containing the membrane proton channel, linked together by a central stalk and a peripheral stalk. During catalysis, ATP synthesis in the catalytic domain of F(1) is coupled via a rotary mechanism of the central stalk subunits to proton translocation. In terms of biological role, component of the F(0) channel, it forms part of the peripheral stalk, linking F(1) to F(0). This Methylobacterium sp. (strain 4-46) protein is ATP synthase subunit b 1.